We begin with the raw amino-acid sequence, 227 residues long: MFS-type transporter FVEG_08288 (227 aa).

The helical transmembrane segment at 8–28 (VFLTVLIAIASCSVYILNIAI) threads the bilayer. A glycan (N-linked (GlcNAc...) asparagine) is linked at asparagine 40. 5 consecutive transmembrane segments (helical) span residues 43-63 (TVGL…MAGG), 100-120 (VANT…YYGV), 122-142 (FMVP…HFTL), 164-181 (FVRN…APWM), and 188-208 (YMMT…IWLI).

The protein belongs to the major facilitator superfamily.

The protein localises to the membrane. In terms of biological role, MFS-type transporter; part of the Fusarium detoxification of benzoxazolinone cluster 1 (FDB1) involved in the degradation of benzoxazolinones produced by the host plant. Maize, wheat, and rye produce the 2 benzoxazinone phytoanticipins 2,4-dihy-droxy-7-methoxy-1,4-benzoxazin-3-one (DIMBOA) and 2,4-dihydroxy-1,4-benzoxazin-3-one (DIBOA) that, due to their inherent instability once released, spontaneously degrade to the more stable corresponding benzoxazolinones, 6-methoxy-2-benzoxazolinone (MBOA) and 2-benzoxazolinone (BOA), respectively. The polypeptide is MFS-type transporter FVEG_08288 (Gibberella moniliformis (strain M3125 / FGSC 7600) (Maize ear and stalk rot fungus)).